A 1480-amino-acid polypeptide reads, in one-letter code: Cystic fibrosis transmembrane conductance regulator (1480 aa).

The Cytoplasmic portion of the chain corresponds to 1–77 (MQRSPLEKAS…KLINALRRCF (77 aa)). A helical membrane pass occupies residues 78-98 (FWRFMFYGILLYLGEVTKAVQ). The ABC transmembrane type-1 1 domain occupies 81–365 (FMFYGILLYL…WAVQTWYDSL (285 aa)). Topologically, residues 99-122 (PLLLGRIIASYDPDNKTERSIAIY) are extracellular. A helical transmembrane segment spans residues 123 to 146 (LGIGLCLLFIVRTLLLHPAIFGLH). Residues 147-195 (HIGMQMRIAMFSLIYKKTLKLSSRVLDKISIGQLVSLLSNNLNKFDEGL) lie on the Cytoplasmic side of the membrane. Residues 196–216 (ALAHFVWIAPLQVALLMGLIW) traverse the membrane as a helical segment. Residues 217–222 (ELLQAS) lie on the Extracellular side of the membrane. A helical transmembrane segment spans residues 223–243 (AFCGLGFLIVLALFQAGLGRM). The Cytoplasmic segment spans residues 244 to 298 (MMKYRDQRAGKINERLVITSEMIENIQSVKAYCWEEAMEKMIENLRQTELKLTRK). Residues 299–319 (AAYVRYFNSSAFFFSGFFVVF) traverse the membrane as a helical segment. The Extracellular segment spans residues 320–339 (LSVLPYALIKGIVLRKIFTT). The helical transmembrane segment at 340–358 (ISFCIVLRMAVTRQFPWAV) threads the bilayer. Residues 359-858 (QTWYDSLGAI…YLRYITLHKS (500 aa)) lie on the Cytoplasmic side of the membrane. Residues W401, S434, 458–465 (GSTGAGKT), and Q493 contribute to the ATP site. Residues 423-646 (NGDDNLFFSN…RPDFSSKLMG (224 aa)) form the ABC transporter 1 domain. A lipid anchor (S-palmitoyl cysteine) is attached at C524. Phosphoserine occurs at positions 549 and 660. The segment at 654–831 (SSERRNSILT…EEINEEDLKE (178 aa)) is disordered R region. A Phosphoserine; by PKA modification is found at S670. S686 is modified (phosphoserine). K688 participates in a covalent cross-link: Glycyl lysine isopeptide (Lys-Gly) (interchain with G-Cter in ubiquitin). Residues S700 and S712 each carry the phosphoserine modification. The residue at position 717 (T717) is a Phosphothreonine. Phosphoserine is present on residues S737, S753, S768, S790, S795, and S813. A helical membrane pass occupies residues 859-879 (LIFVLIWCLVIFLAEVAASLV). The 297-residue stretch at 859–1155 (LIFVLIWCLV…AVNSSIDVDS (297 aa)) folds into the ABC transmembrane type-1 2 domain. Residues 880-918 (VLWFLGNTPFQDKGNSTYSRNNSYAVIITNTSSYYVFYI) are Extracellular-facing. N-linked (GlcNAc...) asparagine glycosylation is found at N894, N900, and N909. Residues 919–939 (YVGVADTLLALGFFRGLPLVH) form a discontinuously helical membrane-spanning segment. The Cytoplasmic portion of the chain corresponds to 940 to 990 (TLITVSKILHHKMLHSVLQAPMSTLNTLKAGGILNRFSKDIAILDDLLPLT). The helical transmembrane segment at 991-1011 (IFDFIQLLLIVIGAIAVVSVL) threads the bilayer. At 1012 to 1013 (QP) the chain is on the extracellular side. A helical transmembrane segment spans residues 1014–1034 (YILLATVPVIAAFILLRAYFL). Over 1035-1095 (QTSQQLKQLE…TANWFLYLAT (61 aa)) the chain is Cytoplasmic. The helical transmembrane segment at 1096-1116 (LRWFQMRIEIIFVIFFIAVTF) threads the bilayer. Topologically, residues 1117–1130 (ISILTTGEGEGTVG) are extracellular. A helical transmembrane segment spans residues 1131–1151 (IILTLAMNIMSTLQWAVNSSI). Over 1152–1480 (DVDSLMRSVS…TEEEVQETRL (329 aa)) the chain is Cytoplasmic. Residues 1210–1443 (MTIKDLTAKY…KSLFQQAISH (234 aa)) form the ABC transporter 2 domain. ATP-binding positions include Y1219 and 1244–1251 (GRTGSGKS). Residues 1386 to 1480 (RALKQAFADC…TEEEVQETRL (95 aa)) are interaction with GORASP2. C1395 is lipidated: S-palmitoyl cysteine. Phosphoserine occurs at positions 1444 and 1456. The segment at 1452-1480 (HRNSSKYKSPPQIASLKEETEEEVQETRL) is disordered. Acidic residues predominate over residues 1470-1480 (ETEEEVQETRL). Residues 1478–1480 (TRL) carry the PDZ-binding motif.

The protein belongs to the ABC transporter superfamily. ABCC family. CFTR transporter (TC 3.A.1.202) subfamily. As to quaternary structure, monomer; does not require oligomerization for channel activity. May form oligomers in the membrane. Interacts with SLC26A3, SLC26A6 and NHERF1. Interacts with SHANK2. Interacts with MYO6. Interacts (via C-terminus) with GOPC (via PDZ domain); this promotes CFTR internalization and thereby decreases channel activity. Interacts with SLC4A7 through NHERF1. Found in a complex with MYO5B and RAB11A. Interacts with ANO1. Interacts with SLC26A8. Interacts with AHCYL1; the interaction increases CFTR activity. Interacts with CSE1L. The core-glycosylated form interacts with GORASP2 (via PDZ GRASP-type 1 domain) in respone to ER stress. Interacts with MARCHF2; the interaction leads to CFTR ubiqtuitination and degradation. Interacts with ADGRG2. Post-translationally, N-glycosylated. In terms of processing, phosphorylated; cAMP treatment promotes phosphorylation and activates the channel. Dephosphorylation decreases the ATPase activity (in vitro). Phosphorylation at PKA sites activates the channel. Phosphorylation at PKC sites enhances the response to phosphorylation by PKA. Phosphorylated by AMPK; this inhibits channel activity. Ubiquitinated, leading to its degradation in the lysosome. Deubiquitination by USP10 in early endosomes enhances its endocytic recycling to the cell membrane. Ubiquitinated by RNF185 during ER stress. Ubiquitinated by MARCHF2.

It is found in the apical cell membrane. The protein resides in the early endosome membrane. It localises to the cell membrane. The protein localises to the recycling endosome membrane. Its subcellular location is the endoplasmic reticulum membrane. It is found in the nucleus. It catalyses the reaction ATP + H2O + closed Cl(-) channel = ADP + phosphate + open Cl(-) channel.. It carries out the reaction chloride(in) = chloride(out). The catalysed reaction is hydrogencarbonate(in) = hydrogencarbonate(out). The enzyme catalyses ATP + H2O = ADP + phosphate + H(+). Epithelial ion channel that plays an important role in the regulation of epithelial ion and water transport and fluid homeostasis. Mediates the transport of chloride ions across the cell membrane. Possesses an intrinsic ATPase activity and utilizes ATP to gate its channel; the passive flow of anions through the channel is gated by cycles of ATP binding and hydrolysis by the ATP-binding domains. The ion channel is also permeable to HCO(3)(-); selectivity depends on the extracellular chloride concentration. Exerts its function also by modulating the activity of other ion channels and transporters. Contributes to the regulation of the pH and the ion content of the epithelial fluid layer. Modulates the activity of the epithelial sodium channel (ENaC) complex, in part by regulating the cell surface expression of the ENaC complex. May regulate bicarbonate secretion and salvage in epithelial cells by regulating the transporter SLC4A7. Can inhibit the chloride channel activity of ANO1. Plays a role in the chloride and bicarbonate homeostasis during sperm epididymal maturation and capacitation. The polypeptide is Cystic fibrosis transmembrane conductance regulator (Ateles geoffroyi (Black-handed spider monkey)).